The primary structure comprises 290 residues: Glycine--tRNA ligase alpha subunit (290 aa).

Belongs to the class-II aminoacyl-tRNA synthetase family. In terms of assembly, tetramer of two alpha and two beta subunits.

It is found in the cytoplasm. It catalyses the reaction tRNA(Gly) + glycine + ATP = glycyl-tRNA(Gly) + AMP + diphosphate. This Desulfotalea psychrophila (strain LSv54 / DSM 12343) protein is Glycine--tRNA ligase alpha subunit.